Here is a 142-residue protein sequence, read N- to C-terminus: 3-hydroxyacyl-[acyl-carrier-protein] dehydratase FabZ (142 aa).

His-41 is a catalytic residue.

It belongs to the thioester dehydratase family. FabZ subfamily.

The protein localises to the cytoplasm. It catalyses the reaction a (3R)-hydroxyacyl-[ACP] = a (2E)-enoyl-[ACP] + H2O. Functionally, involved in unsaturated fatty acids biosynthesis. Catalyzes the dehydration of short chain beta-hydroxyacyl-ACPs and long chain saturated and unsaturated beta-hydroxyacyl-ACPs. In Symbiobacterium thermophilum (strain DSM 24528 / JCM 14929 / IAM 14863 / T), this protein is 3-hydroxyacyl-[acyl-carrier-protein] dehydratase FabZ.